Reading from the N-terminus, the 215-residue chain is MKLVLMGLPGAGKGTQAEQIVEKYNIPHISTGDMFRAAMKNNTELGKKAKSFMDNGDLVPDEVTNGIVRERLAEDDAKNGFLLDGFPRTVEQAEELENILSDLGTELDAVINIEVDKDVLMKRLTGRWICRTCGKTYHEIYNPPKVPGKCDLDGGELYQREDDKKETVENRLNVNMKQTKPLLDFYSEKGKLHSINGEQDINDVFVDVEKILASF.

G10–T15 contacts ATP. The segment at S30–V59 is NMP. AMP-binding positions include T31, R36, D57–V59, G85–R88, and Q92. An LID region spans residues G126–D163. ATP is bound at residue R127. Zn(2+)-binding residues include C130 and C133. T136–Y137 is a binding site for ATP. Positions 150 and 153 each coordinate Zn(2+). 2 residues coordinate AMP: R160 and R171. Q199 contacts ATP.

It belongs to the adenylate kinase family. In terms of assembly, monomer.

It is found in the cytoplasm. It catalyses the reaction AMP + ATP = 2 ADP. It functions in the pathway purine metabolism; AMP biosynthesis via salvage pathway; AMP from ADP: step 1/1. In terms of biological role, catalyzes the reversible transfer of the terminal phosphate group between ATP and AMP. Plays an important role in cellular energy homeostasis and in adenine nucleotide metabolism. This chain is Adenylate kinase, found in Listeria innocua serovar 6a (strain ATCC BAA-680 / CLIP 11262).